The following is a 635-amino-acid chain: PTS system mannitol-specific EIICBA component (635 aa).

Residues 12-342 (FGRFLSNMVM…LFKTSKVKER (331 aa)) form the PTS EIIC type-2 domain. Helical transmembrane passes span 24-45 (IGAFIAWGIITALFIPTGWLPN), 50-70 (KLVGPMITYLLPLLIGYTGGK), 134-155 (SAGIIGMILAILAFLGIGPAVE), 165-185 (VNFMVAHDMLPLASIFVEPAK), 273-292 (VILGGMTGVFTLTILNGGLV), and 313-334 (FANIAAIIAAMAVSFVVSAVLF). The PTS EIIB type-2 domain maps to 378 to 473 (RKIIVACDAG…RLVAAQRHID (96 aa)). Cys384 functions as the Phosphocysteine intermediate; for EIIB activity in the catalytic mechanism. Cys384 is subject to Phosphocysteine; by EIIA. The PTS EIIA type-2 domain occupies 494-635 (FQLGADNIFL…VDEVLALLNK (142 aa)). His554 (tele-phosphohistidine intermediate; for EIIA activity) is an active-site residue. The residue at position 554 (His554) is a Phosphohistidine; by HPr.

As to quaternary structure, homodimer. An intramolecular phosphotransfer takes places between His-554 and Cys-384.

The protein localises to the cell inner membrane. The enzyme catalyses D-mannitol(out) + N(pros)-phospho-L-histidyl-[protein] = D-mannitol 1-phosphate(in) + L-histidyl-[protein]. The phosphoenolpyruvate-dependent sugar phosphotransferase system (sugar PTS), a major carbohydrate active transport system, catalyzes the phosphorylation of incoming sugar substrates concomitantly with their translocation across the cell membrane. This system is involved in D-mannitol transport. The polypeptide is PTS system mannitol-specific EIICBA component (Klebsiella pneumoniae).